The following is a 306-amino-acid chain: 2-phosphoglycerate kinase (306 aa).

Residues Met-1–Glu-90 enclose the ATP-cone domain.

This sequence belongs to the 2-phosphoglycerate kinase family. A divalent metal cation serves as cofactor.

It carries out the reaction (2R)-2-phosphoglycerate + ATP = (2R)-2,3-bisphosphoglycerate + ADP + H(+). Its pathway is thermoadapter biosynthesis; cyclic 2,3-diphosphoglycerate biosynthesis; cyclic 2,3-diphosphoglycerate from 2-phospho-D-glycerate: step 1/2. In terms of biological role, catalyzes the phosphorylation of 2-phosphoglycerate to 2,3-diphosphoglycerate. Involved in the biosynthesis of cyclic 2,3-bisphosphoglycerate, a thermoprotectant. The sequence is that of 2-phosphoglycerate kinase from Methanothermobacter thermautotrophicus (strain ATCC 29096 / DSM 1053 / JCM 10044 / NBRC 100330 / Delta H) (Methanobacterium thermoautotrophicum).